The sequence spans 507 residues: Cytochrome P450 4A14 (507 aa).

Positions 1–4 (MGFS) are cleaved as a propeptide — removed in mature form. Heme is bound at residue Glu-318. A Phosphoserine modification is found at Ser-437. Residue Cys-454 participates in heme binding.

It belongs to the cytochrome P450 family. Heme is required as a cofactor.

It is found in the endoplasmic reticulum membrane. It localises to the microsome membrane. The enzyme catalyses an omega-methyl-long-chain fatty acid + reduced [NADPH--hemoprotein reductase] + O2 = an omega-hydroxy-long-chain fatty acid + oxidized [NADPH--hemoprotein reductase] + H2O + H(+). The catalysed reaction is dodecanoate + reduced [NADPH--hemoprotein reductase] + O2 = (11R)-hydroxydodecanoate + oxidized [NADPH--hemoprotein reductase] + H2O + H(+). It catalyses the reaction dodecanoate + reduced [NADPH--hemoprotein reductase] + O2 = 12-hydroxydodecanoate + oxidized [NADPH--hemoprotein reductase] + H2O + H(+). It carries out the reaction tetradecanoate + reduced [NADPH--hemoprotein reductase] + O2 = 14-hydroxytetradecanoate + oxidized [NADPH--hemoprotein reductase] + H2O + H(+). It functions in the pathway lipid metabolism; fatty acid metabolism. Its function is as follows. A cytochrome P450 monooxygenase that catalyzes omega and omega-1 hydroxylation of saturated fatty acids. Exhibits preferential omega versus omega-1 regioselectivity and (R) versus (S) stereoselectivity for hydroxylation of dodecanoic (lauric) acid. Mechanistically, uses molecular oxygen inserting one oxygen atom into a substrate, and reducing the second into a water molecule, with two electrons provided by NADPH via cytochrome P450 reductase (CPR; NADPH-ferrihemoprotein reductase). The chain is Cytochrome P450 4A14 from Rattus norvegicus (Rat).